The primary structure comprises 536 residues: Putative UDP-glucuronosyltransferase ugt-47 (536 aa).

Positions 1 to 21 are cleaved as a signal peptide; that stretch reads MFRYHSILLLAILYFFEYGLA. N-linked (GlcNAc...) asparagine glycosylation is found at N52 and N308. Residues 497 to 517 traverse the membrane as a helical segment; it reads IIVPCFFVAFYFIIFPFFKLF.

It belongs to the UDP-glycosyltransferase family.

The protein localises to the membrane. The enzyme catalyses glucuronate acceptor + UDP-alpha-D-glucuronate = acceptor beta-D-glucuronoside + UDP + H(+). The protein is Putative UDP-glucuronosyltransferase ugt-47 (ugt-47) of Caenorhabditis elegans.